A 1412-amino-acid polypeptide reads, in one-letter code: DNA-directed RNA polymerase subunit beta' (1412 aa).

Residues C70, C72, C85, and C88 each coordinate Zn(2+). Mg(2+)-binding residues include D460, D462, and D464. C819, C893, C900, and C903 together coordinate Zn(2+). Residues 1393–1412 (EAFEFGTPSAPAEEPQHPAE) are disordered.

Belongs to the RNA polymerase beta' chain family. The RNAP catalytic core consists of 2 alpha, 1 beta, 1 beta' and 1 omega subunit. When a sigma factor is associated with the core the holoenzyme is formed, which can initiate transcription. Mg(2+) is required as a cofactor. Requires Zn(2+) as cofactor.

The enzyme catalyses RNA(n) + a ribonucleoside 5'-triphosphate = RNA(n+1) + diphosphate. Its function is as follows. DNA-dependent RNA polymerase catalyzes the transcription of DNA into RNA using the four ribonucleoside triphosphates as substrates. The polypeptide is DNA-directed RNA polymerase subunit beta' (Burkholderia mallei (strain NCTC 10229)).